The chain runs to 110 residues: Period circadian protein (110 aa).

The interval 23–97 (VTNTSIAGTG…GGAGGGGGVT (75 aa)) is disordered. 12 tandem repeats follow at residues 30–31 (GT), 33–34 (GT), 36–37 (GT), 38–39 (GT), 40–41 (GT), 42–43 (GT), 44–45 (GT), 46–47 (GT), 48–49 (GT), 50–51 (GT), 52–53 (GT), and 54–55 (GT). The segment covering 30-63 (GTGGTGGTGTGTGTGTGTGTGTGTGTDTGTGTGT) has biased composition (gly residues). The 24 X 2 AA approximate tandem repeats of G-T stretch occupies residues 30–79 (GTGGTGGTGTGTGTGTGTGTGTGTGTDTGTGTGTRNGTNSGTNSGTRTGT). The 13; approximate repeat unit spans residues 56-57 (DT). Repeat copies occupy residues 58–59 (GT), 60–61 (GT), and 62–63 (GT). One copy of the 17; approximate repeat lies at 64 to 65 (RN). Low complexity predominate over residues 64–83 (RNGTNSGTNSGTRTGTASSY). Residues 66 to 67 (GT) form repeat 18. A 19; approximate repeat occupies 68-69 (NS). Copy 20 of the repeat occupies 70–71 (GT). A 21; approximate repeat occupies 72 to 73 (NS). Repeat unit 22 spans residues 74-75 (GT). A 23; approximate repeat occupies 76–77 (RT). Repeat 24 spans residues 78-79 (GT). Gly residues predominate over residues 84–96 (RGGGGGAGGGGGV).

Forms a heterodimer with timeless (TIM); the complex then translocates into the nucleus. In terms of processing, phosphorylated with a circadian rhythmicity, probably by the double-time protein (dbt). Phosphorylation could be implicated in the stability of per monomer and in the formation of heterodimer per-tim.

It is found in the nucleus. It localises to the cytoplasm. The protein resides in the perinuclear region. Essential for biological clock functions. Determines the period length of circadian and ultradian rhythms; an increase in PER dosage leads to shortened circadian rhythms and a decrease leads to lengthened circadian rhythms. Essential for the circadian rhythmicity of locomotor activity, eclosion behavior, and for the rhythmic component of the male courtship song that originates in the thoracic nervous system. The biological cycle depends on the rhythmic formation and nuclear localization of the TIM-PER complex. Light induces the degradation of TIM, which promotes elimination of PER. Nuclear activity of the heterodimer coordinatively regulates PER and TIM transcription through a negative feedback loop. Behaves as a negative element in circadian transcriptional loop. Does not appear to bind DNA, suggesting indirect transcriptional inhibition. The chain is Period circadian protein (per) from Drosophila erecta (Fruit fly).